We begin with the raw amino-acid sequence, 407 residues long: Shaggy-related protein kinase iota (407 aa).

The segment covering Met1–Leu19 has biased composition (low complexity). The segment at Met1–Asp23 is disordered. Ala2 carries the post-translational modification N-acetylalanine. One can recognise a Protein kinase domain in the interval Tyr70–Phe354. Residues Val76–Val84 and Lys99 contribute to the ATP site. The active-site Proton acceptor is the Asp195. Residue Tyr230 is modified to Phosphotyrosine.

This sequence belongs to the protein kinase superfamily. CMGC Ser/Thr protein kinase family. GSK-3 subfamily. As to quaternary structure, binds to KIB1. Interacts with BSK6. Autophosphorylated mainly on threonine and serine residues.

The enzyme catalyses L-seryl-[protein] + ATP = O-phospho-L-seryl-[protein] + ADP + H(+). It carries out the reaction L-threonyl-[protein] + ATP = O-phospho-L-threonyl-[protein] + ADP + H(+). Phosphorylates BSK1, BSK3, BSK5, BSK6, BSK8 and BSK11 in vitro. May mediate extracellular signals to regulate transcription in differentiating cells. This chain is Shaggy-related protein kinase iota (ASK9), found in Arabidopsis thaliana (Mouse-ear cress).